A 184-amino-acid chain; its full sequence is Large ribosomal subunit protein uL6 (184 aa).

This sequence belongs to the universal ribosomal protein uL6 family. As to quaternary structure, part of the 50S ribosomal subunit.

This protein binds to the 23S rRNA, and is important in its secondary structure. It is located near the subunit interface in the base of the L7/L12 stalk, and near the tRNA binding site of the peptidyltransferase center. In Desulfitobacterium hafniense (strain Y51), this protein is Large ribosomal subunit protein uL6.